Here is a 241-residue protein sequence, read N- to C-terminus: Uridylate kinase (241 aa).

15–18 serves as a coordination point for ATP; sequence KLSG. The interval 23-28 is involved in allosteric activation by GTP; sequence GSEGFG. A UMP-binding site is contributed by Gly57. ATP is bound by residues Gly58 and Arg62. UMP is bound by residues Asp77 and 138 to 145; that span reads TGNPFFTT. Residues Thr165, Phe171, and Asp174 each contribute to the ATP site.

The protein belongs to the UMP kinase family. As to quaternary structure, homohexamer.

The protein resides in the cytoplasm. It carries out the reaction UMP + ATP = UDP + ADP. It functions in the pathway pyrimidine metabolism; CTP biosynthesis via de novo pathway; UDP from UMP (UMPK route): step 1/1. Allosterically activated by GTP. Inhibited by UTP. Catalyzes the reversible phosphorylation of UMP to UDP. The polypeptide is Uridylate kinase (Klebsiella pneumoniae subsp. pneumoniae (strain ATCC 700721 / MGH 78578)).